Consider the following 380-residue polypeptide: Ribosomal RNA large subunit methyltransferase F (380 aa).

Disordered stretches follow at residues 1–54 and 260–279; these read MSHK…PRNA and SQVM…ATDK. Over residues 21–32 the composition is skewed to low complexity; sequence QRQVVSKSSLQK. The segment covering 44-53 has biased composition (basic residues); it reads QKSKALHPRN. A compositionally biased stretch (low complexity) spans 260–270; that stretch reads SQVMSPQVQPS.

Belongs to the methyltransferase superfamily. METTL16/RlmF family.

It is found in the cytoplasm. It carries out the reaction adenosine(1618) in 23S rRNA + S-adenosyl-L-methionine = N(6)-methyladenosine(1618) in 23S rRNA + S-adenosyl-L-homocysteine + H(+). Specifically methylates the adenine in position 1618 of 23S rRNA. In Shewanella pealeana (strain ATCC 700345 / ANG-SQ1), this protein is Ribosomal RNA large subunit methyltransferase F.